A 512-amino-acid polypeptide reads, in one-letter code: MGSLPTNNLESISLCSQNPLDPDEFRRQGHMIIDFLADYYKNVEKYPVRSQVEPGYLKKRLPESAPYNPESIETILEDVTNDIIPGLTHWQSPNYFAYFPSSGSIAGFLGEMLSTGFNVVGFNWMSSPAATELESIVMNWLGQMLTLPKSFLFSSDGSSGGGGVLQGTTCEAILCTLTAARDKMLNKIGRENINKLVVYASDQTHCALQKAAQIAGINPKNVRAIKTSKATNFGLSPNSLQSAILADIESGLVPLFLCATVGTTSSTAVDPIGPLCAVAKLYGIWVHIDAAYAGSACICPEFRHFIDGVEDADSFSLNAHKWFFTTLDCCCLWVKDSDSLVKALSTSPEYLKNKATESKQVIDYKDWQIALSRRFRSMKLWLVLRSYGVANLRTFLRSHVKMAKHFQGLIGMDNRFEIVVPRTFAMVCFRLKPTAIFKQKIVDNDYIEDQTNEVNVKLLESVNASGKIYMTHAVVGGVYMIRFAVGATLTEERHVTGAWKVVQEHTDAILGA.

The L-tyrosine site is built by proline 100, histidine 205, and histidine 320. Position 321 is an N6-(pyridoxal phosphate)lysine (lysine 321). L-tyrosine is bound at residue tyrosine 350.

The protein belongs to the group II decarboxylase family. In terms of assembly, homodimer. Requires pyridoxal 5'-phosphate as cofactor. Mainly expressed in roots, stems and capsule walls.

The enzyme catalyses L-tyrosine + H(+) = tyramine + CO2. Tyrosine decarboxylase that converts tyrosine into tyramine, a precursor of isoquinoline alkaloids and various amides. The polypeptide is Tyrosine decarboxylase (Papaver somniferum (Opium poppy)).